The primary structure comprises 535 residues: SIR4-interacting protein SIF2 (535 aa).

Residues 4–36 (TSEELNYLIWRYCQEMGHEVSALALQDETRVLE) form the LisH domain. The disordered stretch occupies residues 104-140 (EGRFTLETNSESNKAGEDGASTVERETQEDDTNSIDS). Acidic residues predominate over residues 130 to 140 (TQEDDTNSIDS). Ser-137 is modified (phosphoserine). WD repeat units follow at residues 155 to 186 (VKLD…RLAR), 218 to 248 (KTTN…RLWN), 259 to 289 (FHRA…ILWN), 316 to 345 (GDGS…FVYQ), 357 to 387 (GHHG…RIWH), 399 to 428 (GHSQ…RLWS), 440 to 470 (VDGV…NVYD), and 503 to 534 (SQDN…SVVA).

As to quaternary structure, homotetramer. Interacts with SIR4 N-terminal domain. Interacts with a complex composed of SIN3 and RPD3. Identified in the Set3C complex with HOS2, HST1, SNT1, CPR1, HOS4/YIL112W and SET3.

The protein resides in the nucleus. Its function is as follows. Antagonizes telomeric silencing in yeast. May recruit SIR4 to non-telomeric sites or repression. In Saccharomyces cerevisiae (strain ATCC 204508 / S288c) (Baker's yeast), this protein is SIR4-interacting protein SIF2 (SIF2).